The following is a 210-amino-acid chain: 3-hexulose-6-phosphate synthase 3 (210 aa).

The protein belongs to the HPS/KGPDC family. HPS subfamily.

It carries out the reaction D-ribulose 5-phosphate + formaldehyde = D-arabino-hex-3-ulose 6-phosphate. Its pathway is one-carbon metabolism; formaldehyde assimilation via RuMP pathway; D-fructose 6-phosphate from D-ribulose 5-phosphate and formaldehyde: step 1/2. Catalyzes the condensation of ribulose 5-phosphate with formaldehyde to form 3-hexulose 6-phosphate. The chain is 3-hexulose-6-phosphate synthase 3 from Staphylococcus saprophyticus subsp. saprophyticus (strain ATCC 15305 / DSM 20229 / NCIMB 8711 / NCTC 7292 / S-41).